An 87-amino-acid polypeptide reads, in one-letter code: Small ribosomal subunit protein bS20 (87 aa).

Residues 1–22 (MANIKSQIKRIGTNKKAQERNK) are disordered.

Belongs to the bacterial ribosomal protein bS20 family.

In terms of biological role, binds directly to 16S ribosomal RNA. The protein is Small ribosomal subunit protein bS20 of Clavibacter sepedonicus (Clavibacter michiganensis subsp. sepedonicus).